Here is a 260-residue protein sequence, read N- to C-terminus: Small ribosomal subunit protein uS2 (260 aa).

Basic and acidic residues predominate over residues 228–240 (RKETKAENAEEAM). Residues 228–260 (RKETKAENAEEAMKQAAEAEAEAAAPAAEESAE) are disordered. A compositionally biased stretch (low complexity) spans 241–260 (KQAAEAEAEAAAPAAEESAE).

Belongs to the universal ribosomal protein uS2 family.

This chain is Small ribosomal subunit protein uS2, found in Oleidesulfovibrio alaskensis (strain ATCC BAA-1058 / DSM 17464 / G20) (Desulfovibrio alaskensis).